The sequence spans 417 residues: MFSKQDQIQGYDDALLAAMNAEEQRQEDHIELIASENYTSKRVMQAQGSGLTNKYAEGYPGKRYYGGCEHVDKVEALAIERAKQLFGADYANVQPHSGSSANSAVYLALLQAGDTILGMSLAHGGHLTHGAKVSSSGKLYNAVQYGIDTKTGLIDYDEVERLAVECKPKMIVAGFSAYSKTLDFPRFRQIADKVGALLFVDMAHVAGLVAAGLYPNPLPYADVVTTTTHKTLRGPRGGLILAKANEEIEKKLNAAVFPGAQGGPLMHVIAGKAVCFKEALEPGFKAYQQQVIDNAQAMASVFIKRGYDVVSGGTDNHLFLVSLIRQGLTGKDADAALGRAHITVNKNAVPNDPQSPFVTSGLRIGTPAVTTRGFKVTQCVTLAGWICDILDNLGDADVEANVAQQVSALCADFPVYR.

Residues Leu121 and 125–127 (GHL) each bind (6S)-5,6,7,8-tetrahydrofolate. Lys230 carries the post-translational modification N6-(pyridoxal phosphate)lysine. 355-357 (SPF) is a binding site for (6S)-5,6,7,8-tetrahydrofolate.

Belongs to the SHMT family. In terms of assembly, homodimer. It depends on pyridoxal 5'-phosphate as a cofactor.

It is found in the cytoplasm. It carries out the reaction (6R)-5,10-methylene-5,6,7,8-tetrahydrofolate + glycine + H2O = (6S)-5,6,7,8-tetrahydrofolate + L-serine. The protein operates within one-carbon metabolism; tetrahydrofolate interconversion. It functions in the pathway amino-acid biosynthesis; glycine biosynthesis; glycine from L-serine: step 1/1. In terms of biological role, catalyzes the reversible interconversion of serine and glycine with tetrahydrofolate (THF) serving as the one-carbon carrier. This reaction serves as the major source of one-carbon groups required for the biosynthesis of purines, thymidylate, methionine, and other important biomolecules. Also exhibits THF-independent aldolase activity toward beta-hydroxyamino acids, producing glycine and aldehydes, via a retro-aldol mechanism. This chain is Serine hydroxymethyltransferase 3, found in Pseudomonas fluorescens (strain Pf0-1).